A 240-amino-acid chain; its full sequence is Ribosomal RNA small subunit methyltransferase G (240 aa).

Residues G79, F84, A130 to E131, and R149 contribute to the S-adenosyl-L-methionine site.

It belongs to the methyltransferase superfamily. RNA methyltransferase RsmG family.

The protein localises to the cytoplasm. In terms of biological role, specifically methylates the N7 position of a guanine in 16S rRNA. The chain is Ribosomal RNA small subunit methyltransferase G from Desulforamulus reducens (strain ATCC BAA-1160 / DSM 100696 / MI-1) (Desulfotomaculum reducens).